Consider the following 261-residue polypeptide: Flagellar L-ring protein (261 aa).

The signal sequence occupies residues 1 to 15 (MKRLLCLLLLTTLTG). Cys-16 carries N-palmitoyl cysteine lipidation. Cys-16 carries the S-diacylglycerol cysteine lipid modification. The segment covering 121-133 (KSADAELSKKNDS) has biased composition (basic and acidic residues). A disordered region spans residues 121 to 140 (KSADAELSKKNDSSMDPLQV).

Belongs to the FlgH family. In terms of assembly, the basal body constitutes a major portion of the flagellar organelle and consists of four rings (L,P,S, and M) mounted on a central rod.

Its subcellular location is the cell outer membrane. The protein localises to the bacterial flagellum basal body. Assembles around the rod to form the L-ring and probably protects the motor/basal body from shearing forces during rotation. In Aliivibrio salmonicida (strain LFI1238) (Vibrio salmonicida (strain LFI1238)), this protein is Flagellar L-ring protein.